The sequence spans 188 residues: Large ribosomal subunit protein eL18A (188 aa).

A disordered region spans residues 153–188; sequence GKAPSTPHSRTKPYVLSKGRKFERARGRRASRGYKN. Residues 178–188 are compositionally biased toward basic residues; sequence RGRRASRGYKN.

The protein belongs to the eukaryotic ribosomal protein eL18 family. Component of the large ribosomal subunit.

The protein localises to the cytoplasm. Functionally, component of the large ribosomal subunit. The ribosome is a large ribonucleoprotein complex responsible for the synthesis of proteins in the cell. The sequence is that of Large ribosomal subunit protein eL18A (rpl18-a) from Xenopus laevis (African clawed frog).